Consider the following 523-residue polypeptide: NADP-specific glutamate dehydrogenase (523 aa).

The segment at 26–50 (CARGRSAKRDVAAKRLRSRSPRMDA) is disordered. K202 is an active-site residue.

Belongs to the Glu/Leu/Phe/Val dehydrogenases family. As to quaternary structure, homo- and heterohexamer of alpha and beta subunits. Both subunits are encoded by the same gene. The N-termini of the alpha and the beta chains are blocked.

It localises to the plastid. The protein localises to the chloroplast. It catalyses the reaction L-glutamate + NADP(+) + H2O = 2-oxoglutarate + NH4(+) + NADPH + H(+). This Chlorella sorokiniana (Freshwater green alga) protein is NADP-specific glutamate dehydrogenase.